The following is a 441-amino-acid chain: Putative transporter AmpG 1 (441 aa).

12 consecutive transmembrane segments (helical) span residues 5 to 25 (SHLL…MITG), 42 to 62 (IGIL…APIF), 78 to 98 (LSWI…FSFL), 104 to 124 (LVLF…QDTI), 143 to 163 (GIYI…AIYL), 171 to 191 (EIYK…IVAA), 249 to 269 (SGND…LVLY), 297 to 317 (VGKF…GFIM), 325 to 345 (SIFL…FLEI), 352 to 372 (LLFI…TAYI), 390 to 410 (FLSS…GYMV), and 413 to 433 (FGWQ…LLIL).

The protein belongs to the major facilitator superfamily.

Its subcellular location is the cell inner membrane. This chain is Putative transporter AmpG 1 (ampG1), found in Rickettsia felis (strain ATCC VR-1525 / URRWXCal2) (Rickettsia azadi).